Consider the following 494-residue polypeptide: Lysine--tRNA ligase (494 aa).

Positions 407 and 414 each coordinate Mg(2+).

This sequence belongs to the class-II aminoacyl-tRNA synthetase family. As to quaternary structure, homodimer. Requires Mg(2+) as cofactor.

Its subcellular location is the cytoplasm. The catalysed reaction is tRNA(Lys) + L-lysine + ATP = L-lysyl-tRNA(Lys) + AMP + diphosphate. The sequence is that of Lysine--tRNA ligase from Lactococcus lactis subsp. cremoris (strain SK11).